The primary structure comprises 112 residues: Small ribosomal subunit protein bS6 (112 aa).

The protein belongs to the bacterial ribosomal protein bS6 family.

Binds together with bS18 to 16S ribosomal RNA. The sequence is that of Small ribosomal subunit protein bS6 from Chlamydia caviae (strain ATCC VR-813 / DSM 19441 / 03DC25 / GPIC) (Chlamydophila caviae).